Reading from the N-terminus, the 807-residue chain is Maternal DNA replication licensing factor mcm3 (807 aa).

The MCM domain maps to 295–502 (IFEHLSKSLA…NDQEIADHVL (208 aa)). 345–352 (GDPSVAKS) lines the ATP pocket. Positions 477–480 (SRFD) match the Arginine finger motif. Basic and acidic residues predominate over residues 664–673 (KTDKDLHDEN). Positions 664–741 (KTDKDLHDEN…QDGKRSLSQN (78 aa)) are disordered. Residues 707 to 723 (FSEQDSSLNENLSQSLR) are compositionally biased toward polar residues. Basic and acidic residues predominate over residues 727-741 (KKAESQDGKRSLSQN).

This sequence belongs to the MCM family. As to quaternary structure, component of the mcm2-7 complex (RLF-M). The complex forms a toroidal hexameric ring with the proposed subunit order mcm2-mcm6-mcm4-mcm7-mcm3-mcm5. The heterodimer of mmcm3/mcm5 interacts with mcm4, mmcm6, mcm7 and weakly with mcm2. Interacts with mcm7, though this interaction may not be direct, and remains in a complex with mcm7 throughout the cell cycle. Component of the CMG helicase complex, composed of the mcm2-7 complex, the GINS complex and cdc45.

Its subcellular location is the nucleus. The protein localises to the chromosome. The catalysed reaction is ATP + H2O = ADP + phosphate + H(+). Functionally, acts as a component of the mcm2-7 complex (mcm complex) which is the putative replicative helicase essential for 'once per cell cycle' DNA replication initiation and elongation in eukaryotic cells. The active ATPase sites in the mcm2-7 ring are formed through the interaction surfaces of two neighboring subunits such that a critical structure of a conserved arginine finger motif is provided in trans relative to the ATP-binding site of the Walker A box of the adjacent subunit. The six ATPase active sites, however, are likely to contribute differentially to the complex helicase activity. The existence of maternal and zygotic forms of mcm3 and mcm6 suggests that specific forms of mcm2-7 complexes may be used during different stages of development. The chain is Maternal DNA replication licensing factor mcm3 (mmcm3) from Xenopus laevis (African clawed frog).